We begin with the raw amino-acid sequence, 836 residues long: Serine/threonine-protein kinase ATG1 (836 aa).

The Protein kinase domain occupies 21–321 (YTVEKEIGKG…FNEFFNNEVV (301 aa)). Residues 27-35 (IGKGSFAIV) and K50 contribute to the ATP site. The active-site Proton acceptor is the D168. Disordered regions lie at residues 387 to 425 (EHYR…GQTR), 458 to 489 (NNGP…GGRR), and 619 to 642 (CAID…TPGA). Low complexity predominate over residues 395–404 (LQGQQQQQQQ). Composition is skewed to polar residues over residues 411–425 (RGST…GQTR), 459–468 (NGPTTNNQGA), and 630–640 (GNPSSNQTLTP). The segment at 571–836 (ITPFVESLSA…RLKALKSKMS (266 aa)) is interaction with ATG13.

The protein belongs to the protein kinase superfamily. Ser/Thr protein kinase family. APG1/unc-51/ULK1 subfamily. As to quaternary structure, homodimer. Dimerization requires the presence of ATG13. Forms a ternary complex with ATG13 and ATG17.

It is found in the cytoplasm. Its subcellular location is the preautophagosomal structure membrane. The catalysed reaction is L-seryl-[protein] + ATP = O-phospho-L-seryl-[protein] + ADP + H(+). It catalyses the reaction L-threonyl-[protein] + ATP = O-phospho-L-threonyl-[protein] + ADP + H(+). In terms of biological role, serine/threonine protein kinase involved in the cytoplasm to vacuole transport (Cvt) and found to be essential in autophagy, where it is required for the formation of autophagosomes. Involved in the clearance of protein aggregates which cannot be efficiently cleared by the proteasome. Required for selective autophagic degradation of the nucleus (nucleophagy) as well as for mitophagy which contributes to regulate mitochondrial quantity and quality by eliminating the mitochondria to a basal level to fulfill cellular energy requirements and preventing excess ROS production. Also involved in endoplasmic reticulum-specific autophagic process, in selective removal of ER-associated degradation (ERAD) substrates. Plays a key role in ATG9 and ATG23 cycling through the pre-autophagosomal structure and is necessary to promote ATG18 binding to ATG9 through phosphorylation of ATG9. Catalyzes phosphorylation of ATG4, decreasing the interaction between ATG4 and ATG8 and impairing deconjugation of PE-conjugated forms of ATG8. This chain is Serine/threonine-protein kinase ATG1, found in Kluyveromyces marxianus (strain DMKU3-1042 / BCC 29191 / NBRC 104275) (Yeast).